The sequence spans 128 residues: Sulfurtransferase TusD (128 aa).

The active-site Cysteine persulfide intermediate is cysteine 78.

Belongs to the DsrE/TusD family. Heterohexamer, formed by a dimer of trimers. The hexameric TusBCD complex contains 2 copies each of TusB, TusC and TusD. The TusBCD complex interacts with TusE.

The protein localises to the cytoplasm. In terms of biological role, part of a sulfur-relay system required for 2-thiolation of 5-methylaminomethyl-2-thiouridine (mnm(5)s(2)U) at tRNA wobble positions. Accepts sulfur from TusA and transfers it in turn to TusE. The chain is Sulfurtransferase TusD from Salmonella agona (strain SL483).